The primary structure comprises 1269 residues: MVIDKKKVKNRTPYFLNRIIEKSELREIIEVVFHKNGIAKASLIADNLKEIGFGFATKAGISISIEDLKIPPNKSRILQITNQELRKTEISFKRAEITTIEKSQKSTDTWNNASEALKDEIIKYYRLTDPLNPVYMMAFSGARGNLSQVKQLVGMRGLMADPNGQIIELPILSNFREGLNVTEYLISSYGARKGLVDTSLRTADSGYLTRRLVDVAQDIIVREIDCKTNNGITFSNIQNNEKIIIPLYKRLIGRILADDVKNPITPQVNIASKNTLITGNLIKEFKKNNIQKIKLRSPLTCQSYRSICQKCYGASLSDGKLVDIGEAIGIIAAQSIGEPGTQLTMRTFHTGGVFTAEFSKPIKTLFEGVIKYPSNLKFHHVRTRHGDDAIIIEKSATFDIRTTQSERKITLETGTTLLVKDNSFIKKNQVIAETSTSGRLITEKSTKDLISNSAGEIYFSDITIEERVDRHGNLTKISKQHGLIWILSGEVYNFPMGANLVVQNSFEVNKGCLLAKALIKSRHSGISRIRCAANYYAIDIILGTVTIRNANLYKDSKLFNNNYLLKTSNKKNFVVKALVGQKLSHSDIIAELIDDQYLTNTGGIVKYVNLKLAKTHKDDSEYTLSGIGYIFFIPQETHQINKDASILLANSGDYVNKNTEIAKGVFCKCSGLLEIIKSNNIIKEIIIKPGVVYPVSNNLSTFTNKIFYPGEKIIDNIVTNKIVYVEHIKLINKSCILIRPVNQYKVSNTESLFDFVTKGENKDLISLKVVNKSFFKDGEVIKSVKGVSLVNIQLIFYTKPSATAVTTKMEFVKDLDKSTNSTSEIKLRITATETTKIKYKQQKNIISQILIKEGQYITKDFPIIETLFLSRHDGRVVIKSNFKQKNNACLIIISPSNKKEIYINKKEHKLKIGDFIRVGDHLGTNKNFKSPYSGEVLDINDKLITIRIAEPYLISPGTLIHVNHGELIRKGDYLALLVFDKIKTGDIIQGLPRIEEILEARKPRETCHLAKFDGKIYVHYNDKGESLISLESQKKEKYVYILRLNQRVLVQSGTEVTIGEPITDGLINPHEMLEIFFEYFLTQTSPIQATKASFEKIRLELLKEIQQVYQSQKIEINDKHIEVIIRQMTSKVLIQERGDTTLFPGELVTINQIEKINSAIIAVNKKEAKYKPVLLGITKASLNTDSFISAASFQETTRILTEAAIEGKVDWLKGLKENVIIGRLIPGGTGLISLDNKDSIKMRLALRHKKNFLNKTFKKKNNKFLNKTY.

Residues Cys226, Cys301, Cys308, and Cys311 each contribute to the Zn(2+) site.

The protein belongs to the RNA polymerase beta' chain family. RpoC2 subfamily. In plastids the minimal PEP RNA polymerase catalytic core is composed of four subunits: alpha, beta, beta', and beta''. When a (nuclear-encoded) sigma factor is associated with the core the holoenzyme is formed, which can initiate transcription. The cofactor is Zn(2+).

The protein localises to the plastid. The protein resides in the chloroplast. The catalysed reaction is RNA(n) + a ribonucleoside 5'-triphosphate = RNA(n+1) + diphosphate. In terms of biological role, DNA-dependent RNA polymerase catalyzes the transcription of DNA into RNA using the four ribonucleoside triphosphates as substrates. In Cyanidium caldarium (Red alga), this protein is DNA-directed RNA polymerase subunit beta''.